A 267-amino-acid polypeptide reads, in one-letter code: 4-hydroxy-tetrahydrodipicolinate reductase (267 aa).

NAD(+) contacts are provided by residues 12-17, 100-102, and 126-129; these read GPRGRM, GTT, and APNF. Residue H156 is the Proton donor/acceptor of the active site. H157 is a (S)-2,3,4,5-tetrahydrodipicolinate binding site. The active-site Proton donor is K160. Position 166–167 (166–167) interacts with (S)-2,3,4,5-tetrahydrodipicolinate; that stretch reads GT.

The protein belongs to the DapB family.

The protein localises to the cytoplasm. It catalyses the reaction (S)-2,3,4,5-tetrahydrodipicolinate + NAD(+) + H2O = (2S,4S)-4-hydroxy-2,3,4,5-tetrahydrodipicolinate + NADH + H(+). The enzyme catalyses (S)-2,3,4,5-tetrahydrodipicolinate + NADP(+) + H2O = (2S,4S)-4-hydroxy-2,3,4,5-tetrahydrodipicolinate + NADPH + H(+). It participates in amino-acid biosynthesis; L-lysine biosynthesis via DAP pathway; (S)-tetrahydrodipicolinate from L-aspartate: step 4/4. Its function is as follows. Catalyzes the conversion of 4-hydroxy-tetrahydrodipicolinate (HTPA) to tetrahydrodipicolinate. This Bacillus licheniformis (strain ATCC 14580 / DSM 13 / JCM 2505 / CCUG 7422 / NBRC 12200 / NCIMB 9375 / NCTC 10341 / NRRL NRS-1264 / Gibson 46) protein is 4-hydroxy-tetrahydrodipicolinate reductase.